The chain runs to 291 residues: Light-independent protochlorophyllide reductase iron-sulfur ATP-binding protein (291 aa).

ATP-binding positions include G10–T15 and K39. S14 serves as a coordination point for Mg(2+). [4Fe-4S] cluster is bound by residues C95 and C129. N180–R181 is a binding site for ATP.

It belongs to the NifH/BchL/ChlL family. As to quaternary structure, homodimer. Protochlorophyllide reductase is composed of three subunits; ChlL, ChlN and ChlB. Requires [4Fe-4S] cluster as cofactor.

It is found in the plastid. It localises to the chloroplast. The enzyme catalyses chlorophyllide a + oxidized 2[4Fe-4S]-[ferredoxin] + 2 ADP + 2 phosphate = protochlorophyllide a + reduced 2[4Fe-4S]-[ferredoxin] + 2 ATP + 2 H2O. The protein operates within porphyrin-containing compound metabolism; chlorophyll biosynthesis (light-independent). Component of the dark-operative protochlorophyllide reductase (DPOR) that uses Mg-ATP and reduced ferredoxin to reduce ring D of protochlorophyllide (Pchlide) to form chlorophyllide a (Chlide). This reaction is light-independent. The L component serves as a unique electron donor to the NB-component of the complex, and binds Mg-ATP. The polypeptide is Light-independent protochlorophyllide reductase iron-sulfur ATP-binding protein (Pinus contorta (Shore pine)).